A 266-amino-acid chain; its full sequence is UPF0294 protein YafD (266 aa).

This sequence belongs to the UPF0294 family.

The protein resides in the cytoplasm. This is UPF0294 protein YafD from Salmonella agona (strain SL483).